Consider the following 249-residue polypeptide: UPF0309 protein GTNG_1302 (249 aa).

An SIS domain is found at 31-214 (VSKAVQNGGI…ALMAENGVEP (184 aa)).

It belongs to the UPF0309 family.

The polypeptide is UPF0309 protein GTNG_1302 (Geobacillus thermodenitrificans (strain NG80-2)).